The sequence spans 347 residues: Heat-inducible transcription repressor HrcA (347 aa).

The protein belongs to the HrcA family.

Negative regulator of class I heat shock genes (grpE-dnaK-dnaJ and groELS operons). Prevents heat-shock induction of these operons. This is Heat-inducible transcription repressor HrcA from Rhodococcus jostii (strain RHA1).